A 178-amino-acid chain; its full sequence is Sec-independent protein translocase protein TatB (178 aa).

Residues 2 to 22 (LPEIGAAELLIIAAVALIVVG) form a helical membrane-spanning segment. A disordered region spans residues 104–178 (HSPTGYENTV…KARKTAGSAE (75 aa)). Residues 114-131 (EPPPPEPEPQPAAEPAPK) are compositionally biased toward pro residues. Residues 141–154 (PKAAAAPKAAAKPK) are compositionally biased toward low complexity.

This sequence belongs to the TatB family. The Tat system comprises two distinct complexes: a TatABC complex, containing multiple copies of TatA, TatB and TatC subunits, and a separate TatA complex, containing only TatA subunits. Substrates initially bind to the TatABC complex, which probably triggers association of the separate TatA complex to form the active translocon.

It localises to the cell inner membrane. In terms of biological role, part of the twin-arginine translocation (Tat) system that transports large folded proteins containing a characteristic twin-arginine motif in their signal peptide across membranes. Together with TatC, TatB is part of a receptor directly interacting with Tat signal peptides. TatB may form an oligomeric binding site that transiently accommodates folded Tat precursor proteins before their translocation. The protein is Sec-independent protein translocase protein TatB of Phenylobacterium zucineum (strain HLK1).